The primary structure comprises 170 residues: SKP1-like protein 16 (170 aa).

Positions 109–167 are interaction with the F-box domain of F-box proteins; the sequence is ILAVNYLNVQDLLGLTCQTVADHMKDMSPEEVRELFNIENDYTPEEEDAIRKENAWAFE.

Belongs to the SKP1 family. Part of a SCF (SKP1-cullin-F-box) protein ligase complex. Interacts with CPR1/CPR30, At3g61590 and At4g11590. As to expression, mainly detected in the siliques.

It localises to the nucleus. Its pathway is protein modification; protein ubiquitination. In terms of biological role, involved in ubiquitination and subsequent proteasomal degradation of target proteins. Together with CUL1, RBX1 and a F-box protein, it forms a SCF E3 ubiquitin ligase complex. The functional specificity of this complex depends on the type of F-box protein. In the SCF complex, it serves as an adapter that links the F-box protein to CUL1. This Arabidopsis thaliana (Mouse-ear cress) protein is SKP1-like protein 16 (ASK16).